The following is a 727-amino-acid chain: Procollagen-lysine,2-oxoglutarate 5-dioxygenase 1 (727 aa).

Positions methionine 1 to alanine 18 are cleaved as a signal peptide. N-linked (GlcNAc...) asparagine glycosylation is found at asparagine 163, asparagine 197, and asparagine 538. Residues glutamine 636–proline 727 form the Fe2OG dioxygenase domain. Positions 656 and 658 each coordinate Fe cation. An N-linked (GlcNAc...) asparagine glycan is attached at asparagine 686. Position 708 (histidine 708) interacts with Fe cation. Arginine 718 is a catalytic residue.

In terms of assembly, homodimer. Identified in a complex with P3H3 and P3H4. It depends on Fe(2+) as a cofactor. The cofactor is L-ascorbate.

The protein resides in the rough endoplasmic reticulum membrane. It catalyses the reaction L-lysyl-[collagen] + 2-oxoglutarate + O2 = (5R)-5-hydroxy-L-lysyl-[collagen] + succinate + CO2. Part of a complex composed of PLOD1, P3H3 and P3H4 that catalyzes hydroxylation of lysine residues in collagen alpha chains and is required for normal assembly and cross-linkling of collagen fibrils. Forms hydroxylysine residues in -Xaa-Lys-Gly- sequences in collagens. These hydroxylysines serve as sites of attachment for carbohydrate units and are essential for the stability of the intermolecular collagen cross-links. This is Procollagen-lysine,2-oxoglutarate 5-dioxygenase 1 (PLOD1) from Homo sapiens (Human).